The sequence spans 473 residues: Siroheme synthase 1 (473 aa).

The tract at residues 1-204 is precorrin-2 dehydrogenase /sirohydrochlorin ferrochelatase; the sequence is MDYFPIFCQL…NDHVQADQHV (204 aa). NAD(+) contacts are provided by residues 22 to 23 and 43 to 44; these read EI and CE. Phosphoserine is present on Ser-128. The interval 216–473 is uroporphyrinogen-III C-methyltransferase; the sequence is GEVVLVGAGP…KVTECVAHVG (258 aa). Pro-225 contacts S-adenosyl-L-methionine. Asp-248 serves as the catalytic Proton acceptor. Catalysis depends on Lys-270, which acts as the Proton donor. Residues 301–303, Ile-306, 331–332, Met-382, and Gly-411 contribute to the S-adenosyl-L-methionine site; these read GGD and TA.

In the N-terminal section; belongs to the precorrin-2 dehydrogenase / sirohydrochlorin ferrochelatase family. This sequence in the C-terminal section; belongs to the precorrin methyltransferase family.

It catalyses the reaction uroporphyrinogen III + 2 S-adenosyl-L-methionine = precorrin-2 + 2 S-adenosyl-L-homocysteine + H(+). The catalysed reaction is precorrin-2 + NAD(+) = sirohydrochlorin + NADH + 2 H(+). It carries out the reaction siroheme + 2 H(+) = sirohydrochlorin + Fe(2+). It participates in cofactor biosynthesis; adenosylcobalamin biosynthesis; precorrin-2 from uroporphyrinogen III: step 1/1. The protein operates within cofactor biosynthesis; adenosylcobalamin biosynthesis; sirohydrochlorin from precorrin-2: step 1/1. It functions in the pathway porphyrin-containing compound metabolism; siroheme biosynthesis; precorrin-2 from uroporphyrinogen III: step 1/1. Its pathway is porphyrin-containing compound metabolism; siroheme biosynthesis; siroheme from sirohydrochlorin: step 1/1. It participates in porphyrin-containing compound metabolism; siroheme biosynthesis; sirohydrochlorin from precorrin-2: step 1/1. Multifunctional enzyme that catalyzes the SAM-dependent methylations of uroporphyrinogen III at position C-2 and C-7 to form precorrin-2 via precorrin-1. Then it catalyzes the NAD-dependent ring dehydrogenation of precorrin-2 to yield sirohydrochlorin. Finally, it catalyzes the ferrochelation of sirohydrochlorin to yield siroheme. The protein is Siroheme synthase 1 of Yersinia pestis (strain Pestoides F).